A 256-amino-acid polypeptide reads, in one-letter code: tRNA (guanine-N(7)-)-methyltransferase (256 aa).

Residues 1 to 25 (MVATGGQAQDQSQNQEPDVLNPTSA) are disordered. Residues G79, 102 to 103 (EI), 137 to 138 (NA), and L157 contribute to the S-adenosyl-L-methionine site. Residue D160 is part of the active site. Residue 235 to 237 (SEE) participates in S-adenosyl-L-methionine binding.

The protein belongs to the class I-like SAM-binding methyltransferase superfamily. TrmB family.

The protein resides in the nucleus. It catalyses the reaction guanosine(46) in tRNA + S-adenosyl-L-methionine = N(7)-methylguanosine(46) in tRNA + S-adenosyl-L-homocysteine. Its pathway is tRNA modification; N(7)-methylguanine-tRNA biosynthesis. Catalyzes the formation of N(7)-methylguanine at position 46 (m7G46) in tRNA. The sequence is that of tRNA (guanine-N(7)-)-methyltransferase from Drosophila simulans (Fruit fly).